Consider the following 105-residue polypeptide: Large ribosomal subunit protein uL24 (105 aa).

Positions 67–105 (HISNLNPVDPKTGKATRIGRRKSSEGTLVRYSKKSGEEI) are disordered.

Belongs to the universal ribosomal protein uL24 family. Part of the 50S ribosomal subunit.

Its function is as follows. One of two assembly initiator proteins, it binds directly to the 5'-end of the 23S rRNA, where it nucleates assembly of the 50S subunit. In terms of biological role, one of the proteins that surrounds the polypeptide exit tunnel on the outside of the subunit. In Bacteroides thetaiotaomicron (strain ATCC 29148 / DSM 2079 / JCM 5827 / CCUG 10774 / NCTC 10582 / VPI-5482 / E50), this protein is Large ribosomal subunit protein uL24.